The following is a 303-amino-acid chain: Sushi domain-containing protein 6 (303 aa).

The first 39 residues, 1–39 (MCHGRIAPKSTSVFAVASVGHGVFLPLVILCTLLGDGLA), serve as a signal peptide directing secretion. One can recognise a Sushi domain in the interval 40-104 (SVCPLPPEPE…KPAMEISCRL (65 aa)). Over 40–120 (SVCPLPPEPE…HTSLGVPTLS (81 aa)) the chain is Extracellular. Disulfide bonds link cysteine 42–cysteine 89 and cysteine 74–cysteine 102. The helical transmembrane segment at 121–141 (IVASTASSVALILLLVVLFVL) threads the bilayer. Residues 142 to 303 (LQPKLKSFHH…TDDIPLLKEA (162 aa)) are Cytoplasmic-facing. Disordered stretches follow at residues 199-237 (VLSE…GQSG) and 263-282 (GSGN…NSDI).

The protein localises to the membrane. Its function is as follows. May play a role in growth-suppressive activity and cell death. May be involved in the production of chemokine molecules in umbilical vein endothelial cells (HUVECs) cultured in THP1 monocyte LPS-induced medium. Plays a role in preventing tumor onset. The protein is Sushi domain-containing protein 6 of Homo sapiens (Human).